Reading from the N-terminus, the 555-residue chain is CTP synthase (555 aa).

The segment at 1–265 is amidoligase domain; the sequence is MTRYIFITGG…GNRVCEKLNI (265 aa). Ser-13 is a CTP binding site. UTP is bound at residue Ser-13. ATP-binding positions include 14-19 and Asp-71; that span reads SLGKGI. Positions 71 and 139 each coordinate Mg(2+). Residues 146-148, 186-191, and Lys-222 contribute to the CTP site; these read DIE and KTKPTQ. UTP is bound by residues 186-191 and Lys-222; that span reads KTKPTQ. The region spanning 290–541 is the Glutamine amidotransferase type-1 domain; the sequence is TVAVVGKYVD…IKAGLAAKEA (252 aa). Gly-351 lines the L-glutamine pocket. Cys-378 acts as the Nucleophile; for glutamine hydrolysis in catalysis. L-glutamine contacts are provided by residues 379–382, Glu-402, and Arg-469; that span reads LGMQ. Residues His-514 and Glu-516 contribute to the active site.

It belongs to the CTP synthase family. Homotetramer.

It carries out the reaction UTP + L-glutamine + ATP + H2O = CTP + L-glutamate + ADP + phosphate + 2 H(+). The enzyme catalyses L-glutamine + H2O = L-glutamate + NH4(+). It catalyses the reaction UTP + NH4(+) + ATP = CTP + ADP + phosphate + 2 H(+). Its pathway is pyrimidine metabolism; CTP biosynthesis via de novo pathway; CTP from UDP: step 2/2. With respect to regulation, allosterically activated by GTP, when glutamine is the substrate; GTP has no effect on the reaction when ammonia is the substrate. The allosteric effector GTP functions by stabilizing the protein conformation that binds the tetrahedral intermediate(s) formed during glutamine hydrolysis. Inhibited by the product CTP, via allosteric rather than competitive inhibition. Catalyzes the ATP-dependent amination of UTP to CTP with either L-glutamine or ammonia as the source of nitrogen. Regulates intracellular CTP levels through interactions with the four ribonucleotide triphosphates. This chain is CTP synthase, found in Coxiella burnetii (strain RSA 331 / Henzerling II).